Reading from the N-terminus, the 85-residue chain is Large ribosomal subunit protein bL27 (85 aa).

Residues 1 to 21 (MAHKKAAGSTKNGRDSNAKRL) are disordered.

The protein belongs to the bacterial ribosomal protein bL27 family.

This chain is Large ribosomal subunit protein bL27, found in Hydrogenovibrio crunogenus (strain DSM 25203 / XCL-2) (Thiomicrospira crunogena).